Here is a 1824-residue protein sequence, read N- to C-terminus: E3 ubiquitin-protein ligase UBR1 (1824 aa).

A UBR-type zinc finger spans residues 107–178 (TVCGKVFKNG…KDQYCELHLA (72 aa)). Disordered regions lie at residues 1006-1043 (KQAP…ENRA) and 1073-1093 (ADTE…DWED). Positions 1033–1043 (EQAREERENRA) are enriched in basic and acidic residues. The RING-type; atypical zinc finger occupies 1126-1220 (FKCILCFENC…VEFQCPYCRT (95 aa)).

This sequence belongs to the E3 ubiquitin-protein ligase UBR1-like family.

The enzyme catalyses S-ubiquitinyl-[E2 ubiquitin-conjugating enzyme]-L-cysteine + [acceptor protein]-L-lysine = [E2 ubiquitin-conjugating enzyme]-L-cysteine + N(6)-ubiquitinyl-[acceptor protein]-L-lysine.. Its pathway is protein modification; protein ubiquitination. E3 ubiquitin-protein ligase which is a component of the N-end rule pathway. Recognizes and binds to proteins bearing specific N-terminal residues that are destabilizing according to the N-end rule, leading to their ubiquitination and subsequent degradation. This Drosophila melanogaster (Fruit fly) protein is E3 ubiquitin-protein ligase UBR1.